We begin with the raw amino-acid sequence, 261 residues long: MTHQTHAYHMVNPSPWPLTGALSALLMTSGLIMWFHFNSMYLLMLGLTTNTLTMYQWWRDIVRESTFQGHHTPIVQKGLRYGMILFIVSEVFFFAGFFWAFYHSSLAPTPELGGCWPPTGITPLNPMEVPLLNTSVLLASGVSITWAHHSLMEGNRKHMLQALFITISLGIYFTLLQASEYYETPFTISDGIYGSTFFMATGFHGLHVIIGSTFLIVCFVRQLKFHFTSNHHFGFEAAAWYWHFVDVVWLFLYVSIYWWGS.

Over 1–15 the chain is Mitochondrial matrix; the sequence is MTHQTHAYHMVNPSP. Residues 16-34 form a helical membrane-spanning segment; it reads WPLTGALSALLMTSGLIMW. Residues 35-40 are Mitochondrial intermembrane-facing; sequence FHFNSM. A helical transmembrane segment spans residues 41–66; that stretch reads YLLMLGLTTNTLTMYQWWRDIVREST. Residues 67–72 are Mitochondrial matrix-facing; sequence FQGHHT. A helical membrane pass occupies residues 73-105; sequence PIVQKGLRYGMILFIVSEVFFFAGFFWAFYHSS. The Mitochondrial intermembrane segment spans residues 106 to 128; the sequence is LAPTPELGGCWPPTGITPLNPME. A helical membrane pass occupies residues 129–152; the sequence is VPLLNTSVLLASGVSITWAHHSLM. The Mitochondrial matrix segment spans residues 153-155; it reads EGN. The chain crosses the membrane as a helical span at residues 156 to 183; the sequence is RKHMLQALFITISLGIYFTLLQASEYYE. Residues 184 to 190 are Mitochondrial intermembrane-facing; that stretch reads TPFTISD. The chain crosses the membrane as a helical span at residues 191–223; sequence GIYGSTFFMATGFHGLHVIIGSTFLIVCFVRQL. The Mitochondrial matrix portion of the chain corresponds to 224–232; sequence KFHFTSNHH. The helical transmembrane segment at 233–256 threads the bilayer; sequence FGFEAAAWYWHFVDVVWLFLYVSI. The Mitochondrial intermembrane segment spans residues 257–261; it reads YWWGS.

The protein belongs to the cytochrome c oxidase subunit 3 family. As to quaternary structure, component of the cytochrome c oxidase (complex IV, CIV), a multisubunit enzyme composed of 14 subunits. The complex is composed of a catalytic core of 3 subunits MT-CO1, MT-CO2 and MT-CO3, encoded in the mitochondrial DNA, and 11 supernumerary subunits COX4I, COX5A, COX5B, COX6A, COX6B, COX6C, COX7A, COX7B, COX7C, COX8 and NDUFA4, which are encoded in the nuclear genome. The complex exists as a monomer or a dimer and forms supercomplexes (SCs) in the inner mitochondrial membrane with NADH-ubiquinone oxidoreductase (complex I, CI) and ubiquinol-cytochrome c oxidoreductase (cytochrome b-c1 complex, complex III, CIII), resulting in different assemblies (supercomplex SCI(1)III(2)IV(1) and megacomplex MCI(2)III(2)IV(2)).

The protein localises to the mitochondrion inner membrane. It catalyses the reaction 4 Fe(II)-[cytochrome c] + O2 + 8 H(+)(in) = 4 Fe(III)-[cytochrome c] + 2 H2O + 4 H(+)(out). Functionally, component of the cytochrome c oxidase, the last enzyme in the mitochondrial electron transport chain which drives oxidative phosphorylation. The respiratory chain contains 3 multisubunit complexes succinate dehydrogenase (complex II, CII), ubiquinol-cytochrome c oxidoreductase (cytochrome b-c1 complex, complex III, CIII) and cytochrome c oxidase (complex IV, CIV), that cooperate to transfer electrons derived from NADH and succinate to molecular oxygen, creating an electrochemical gradient over the inner membrane that drives transmembrane transport and the ATP synthase. Cytochrome c oxidase is the component of the respiratory chain that catalyzes the reduction of oxygen to water. Electrons originating from reduced cytochrome c in the intermembrane space (IMS) are transferred via the dinuclear copper A center (CU(A)) of subunit 2 and heme A of subunit 1 to the active site in subunit 1, a binuclear center (BNC) formed by heme A3 and copper B (CU(B)). The BNC reduces molecular oxygen to 2 water molecules using 4 electrons from cytochrome c in the IMS and 4 protons from the mitochondrial matrix. The protein is Cytochrome c oxidase subunit 3 (MT-CO3) of Phoca vitulina (Harbor seal).